Here is a 1608-residue protein sequence, read N- to C-terminus: Protein REDUCED CHLOROPLAST COVERAGE 3 (1608 aa).

Residues 1-12 (MAPRSSKGKSNN) are compositionally biased toward basic residues. 2 disordered regions span residues 1–22 (MAPR…KKKR) and 278–303 (VSES…GRNG). The Clu domain maps to 288-564 (EDEHWGGNGG…KKETDVCGKP (277 aa)). 4 TPR repeats span residues 848 to 881 (GRTL…MIAV), 890 to 923 (ACAY…NERE), 932 to 965 (MKSY…LHFT), and 974 to 1007 (AATY…NKRL). Disordered stretches follow at residues 1194-1226 (VEES…RQPD), 1238-1292 (HNRN…ASGA), 1369-1400 (KQES…KTSD), 1466-1499 (TPRS…VSVD), and 1531-1552 (PAAL…KDSA). The Nuclear localization signal signature appears at 1217-1224 (GRKSRQRQ). Composition is skewed to polar residues over residues 1242–1265 (QDVQ…LSKS) and 1373–1385 (QESA…LTSE). Residues 1535-1546 (SKTSPEAESGGT) are compositionally biased toward polar residues.

It localises to the nucleus. The protein localises to the cytoplasm. The protein resides in the cytosol. Its function is as follows. May act as the scaffold of a protein complex, which sequesters key factors that are required for the G2 to M transition in meristematic tissues. Together with REC2, REC3 and FMT/CLU, contributes to the establishment of the cellular volume devoted to the chloroplast compartment. In Arabidopsis thaliana (Mouse-ear cress), this protein is Protein REDUCED CHLOROPLAST COVERAGE 3.